Here is an 86-residue protein sequence, read N- to C-terminus: Large ribosomal subunit protein uL23 (86 aa).

It belongs to the universal ribosomal protein uL23 family. In terms of assembly, part of the 50S ribosomal subunit. Contacts protein L29.

Its function is as follows. Binds to 23S rRNA. One of the proteins that surrounds the polypeptide exit tunnel on the outside of the ribosome. The chain is Large ribosomal subunit protein uL23 from Thermococcus onnurineus (strain NA1).